Consider the following 220-residue polypeptide: Probable GTP-binding protein EngB (220 aa).

The EngB-type G domain maps to 31–205 (AGVEIAFAGR…LGILNEWCHP (175 aa)). GTP contacts are provided by residues 39 to 46 (GRSNAGKS), 66 to 70 (GRTQL), 84 to 87 (DLPG), 151 to 154 (TKAD), and 184 to 186 (FSS). Serine 46 and threonine 68 together coordinate Mg(2+).

The protein belongs to the TRAFAC class TrmE-Era-EngA-EngB-Septin-like GTPase superfamily. EngB GTPase family. Requires Mg(2+) as cofactor.

Necessary for normal cell division and for the maintenance of normal septation. In Shewanella sediminis (strain HAW-EB3), this protein is Probable GTP-binding protein EngB.